The sequence spans 714 residues: Fatty acid oxidation complex subunit alpha (714 aa).

The enoyl-CoA hydratase stretch occupies residues 1–190 (MDTVSAFKLE…KAGLVDEVVP (190 aa)). Positions 306–714 (GSLRSVAVLG…TFWPADERLT (409 aa)) are 3-hydroxyacyl-CoA dehydrogenase.

In the N-terminal section; belongs to the enoyl-CoA hydratase/isomerase family. The protein in the central section; belongs to the 3-hydroxyacyl-CoA dehydrogenase family. Heterotetramer of two alpha chains (FadJ) and two beta chains (FadI).

Its subcellular location is the cytoplasm. It carries out the reaction a (3S)-3-hydroxyacyl-CoA = a (2E)-enoyl-CoA + H2O. The catalysed reaction is a 4-saturated-(3S)-3-hydroxyacyl-CoA = a (3E)-enoyl-CoA + H2O. It catalyses the reaction a (3S)-3-hydroxyacyl-CoA + NAD(+) = a 3-oxoacyl-CoA + NADH + H(+). The enzyme catalyses (3S)-3-hydroxybutanoyl-CoA = (3R)-3-hydroxybutanoyl-CoA. It functions in the pathway lipid metabolism; fatty acid beta-oxidation. Catalyzes the formation of a hydroxyacyl-CoA by addition of water on enoyl-CoA. Also exhibits 3-hydroxyacyl-CoA epimerase and 3-hydroxyacyl-CoA dehydrogenase activities. The sequence is that of Fatty acid oxidation complex subunit alpha from Klebsiella pneumoniae subsp. pneumoniae (strain ATCC 700721 / MGH 78578).